The chain runs to 214 residues: Pyridoxine/pyridoxamine 5'-phosphate oxidase (214 aa).

Substrate contacts are provided by residues 8 to 11 (RKSY) and K67. FMN is bound by residues 62–67 (RVVLLK), 77–78 (YT), K84, and Q106. 3 residues coordinate substrate: Y124, R128, and S132. FMN is bound by residues 141-142 (QS) and W186. 192–194 (RLH) is a substrate binding site. R196 is a binding site for FMN.

It belongs to the pyridoxamine 5'-phosphate oxidase family. As to quaternary structure, homodimer. FMN serves as cofactor.

It catalyses the reaction pyridoxamine 5'-phosphate + O2 + H2O = pyridoxal 5'-phosphate + H2O2 + NH4(+). The catalysed reaction is pyridoxine 5'-phosphate + O2 = pyridoxal 5'-phosphate + H2O2. The protein operates within cofactor metabolism; pyridoxal 5'-phosphate salvage; pyridoxal 5'-phosphate from pyridoxamine 5'-phosphate: step 1/1. Its pathway is cofactor metabolism; pyridoxal 5'-phosphate salvage; pyridoxal 5'-phosphate from pyridoxine 5'-phosphate: step 1/1. Functionally, catalyzes the oxidation of either pyridoxine 5'-phosphate (PNP) or pyridoxamine 5'-phosphate (PMP) into pyridoxal 5'-phosphate (PLP). This is Pyridoxine/pyridoxamine 5'-phosphate oxidase from Flavobacterium johnsoniae (strain ATCC 17061 / DSM 2064 / JCM 8514 / BCRC 14874 / CCUG 350202 / NBRC 14942 / NCIMB 11054 / UW101) (Cytophaga johnsonae).